Here is a 191-residue protein sequence, read N- to C-terminus: MIRITDTAQEHFAKLLANQEEGTQIRVFVINPGTPTAECGVSYCPPDAVEATDTELKFEKLSAYIDELSKPYLDDAEIDFVTDQLGSQLTLKAPNAKMRKVDDNAPLMERVEYVLQSQINPQLAGHGGRVTLMEITDDSLAILQFGGGCNGCSMVDVTLKEGIEKELLQKFPELKGVRDLTEHQRGEHSYY.

Positions 149 and 152 each coordinate [4Fe-4S] cluster.

Belongs to the NfuA family. As to quaternary structure, homodimer. It depends on [4Fe-4S] cluster as a cofactor.

Functionally, involved in iron-sulfur cluster biogenesis. Binds a 4Fe-4S cluster, can transfer this cluster to apoproteins, and thereby intervenes in the maturation of Fe/S proteins. Could also act as a scaffold/chaperone for damaged Fe/S proteins. The protein is Fe/S biogenesis protein NfuA of Serratia proteamaculans (strain 568).